The sequence spans 295 residues: Ribosomal RNA small subunit methyltransferase A (295 aa).

The S-adenosyl-L-methionine site is built by asparagine 29, leucine 31, glycine 56, glutamate 77, aspartate 102, and asparagine 128.

The protein belongs to the class I-like SAM-binding methyltransferase superfamily. rRNA adenine N(6)-methyltransferase family. RsmA subfamily.

The protein localises to the cytoplasm. The catalysed reaction is adenosine(1518)/adenosine(1519) in 16S rRNA + 4 S-adenosyl-L-methionine = N(6)-dimethyladenosine(1518)/N(6)-dimethyladenosine(1519) in 16S rRNA + 4 S-adenosyl-L-homocysteine + 4 H(+). Specifically dimethylates two adjacent adenosines (A1518 and A1519) in the loop of a conserved hairpin near the 3'-end of 16S rRNA in the 30S particle. May play a critical role in biogenesis of 30S subunits. This chain is Ribosomal RNA small subunit methyltransferase A, found in Listeria innocua serovar 6a (strain ATCC BAA-680 / CLIP 11262).